Reading from the N-terminus, the 434-residue chain is UDP-N-acetylglucosamine 1-carboxyvinyltransferase (434 aa).

22 to 23 (KN) is a phosphoenolpyruvate binding site. A UDP-N-acetyl-alpha-D-glucosamine-binding site is contributed by arginine 93. Residue cysteine 117 is the Proton donor of the active site. At cysteine 117 the chain carries 2-(S-cysteinyl)pyruvic acid O-phosphothioketal. UDP-N-acetyl-alpha-D-glucosamine contacts are provided by aspartate 307 and valine 329.

Belongs to the EPSP synthase family. MurA subfamily.

The protein resides in the cytoplasm. It carries out the reaction phosphoenolpyruvate + UDP-N-acetyl-alpha-D-glucosamine = UDP-N-acetyl-3-O-(1-carboxyvinyl)-alpha-D-glucosamine + phosphate. The protein operates within cell wall biogenesis; peptidoglycan biosynthesis. Its function is as follows. Cell wall formation. Adds enolpyruvyl to UDP-N-acetylglucosamine. The chain is UDP-N-acetylglucosamine 1-carboxyvinyltransferase from Coxiella burnetii (strain CbuG_Q212) (Coxiella burnetii (strain Q212)).